We begin with the raw amino-acid sequence, 370 residues long: Aspartate-semialdehyde dehydrogenase (370 aa).

NADP(+) is bound by residues 10–13, 37–38, and glutamine 73; these read RGMV and TS. Arginine 102 lines the phosphate pocket. Cysteine 135 serves as the catalytic Acyl-thioester intermediate. Glutamine 162 serves as a coordination point for substrate. Residues 165 to 166 and proline 193 contribute to the NADP(+) site; that span reads SG. Residue glutamate 241 participates in substrate binding. Lysine 244 contacts phosphate. Arginine 268 serves as a coordination point for substrate. Catalysis depends on histidine 275, which acts as the Proton acceptor. Position 351 (glutamine 351) interacts with NADP(+).

This sequence belongs to the aspartate-semialdehyde dehydrogenase family. Homodimer.

It catalyses the reaction L-aspartate 4-semialdehyde + phosphate + NADP(+) = 4-phospho-L-aspartate + NADPH + H(+). It functions in the pathway amino-acid biosynthesis; L-lysine biosynthesis via DAP pathway; (S)-tetrahydrodipicolinate from L-aspartate: step 2/4. The protein operates within amino-acid biosynthesis; L-methionine biosynthesis via de novo pathway; L-homoserine from L-aspartate: step 2/3. Its pathway is amino-acid biosynthesis; L-threonine biosynthesis; L-threonine from L-aspartate: step 2/5. In terms of biological role, catalyzes the NADPH-dependent formation of L-aspartate-semialdehyde (L-ASA) by the reductive dephosphorylation of L-aspartyl-4-phosphate. This chain is Aspartate-semialdehyde dehydrogenase (asd), found in Pseudomonas aeruginosa (strain ATCC 15692 / DSM 22644 / CIP 104116 / JCM 14847 / LMG 12228 / 1C / PRS 101 / PAO1).